Here is a 295-residue protein sequence, read N- to C-terminus: UDP-3-O-acyl-N-acetylglucosamine deacetylase (295 aa).

Zn(2+)-binding residues include His-77, His-233, and Asp-237. His-260 functions as the Proton donor in the catalytic mechanism.

It belongs to the LpxC family. Zn(2+) serves as cofactor.

The catalysed reaction is a UDP-3-O-[(3R)-3-hydroxyacyl]-N-acetyl-alpha-D-glucosamine + H2O = a UDP-3-O-[(3R)-3-hydroxyacyl]-alpha-D-glucosamine + acetate. The protein operates within glycolipid biosynthesis; lipid IV(A) biosynthesis; lipid IV(A) from (3R)-3-hydroxytetradecanoyl-[acyl-carrier-protein] and UDP-N-acetyl-alpha-D-glucosamine: step 2/6. In terms of biological role, catalyzes the hydrolysis of UDP-3-O-myristoyl-N-acetylglucosamine to form UDP-3-O-myristoylglucosamine and acetate, the committed step in lipid A biosynthesis. The chain is UDP-3-O-acyl-N-acetylglucosamine deacetylase from Solibacter usitatus (strain Ellin6076).